The sequence spans 213 residues: Thiamine-phosphate synthase (213 aa).

Residues 38 to 42 (QLREK) and asparagine 73 contribute to the 4-amino-2-methyl-5-(diphosphooxymethyl)pyrimidine site. Mg(2+) contacts are provided by aspartate 74 and aspartate 93. Serine 111 provides a ligand contact to 4-amino-2-methyl-5-(diphosphooxymethyl)pyrimidine. 137 to 139 (TTS) provides a ligand contact to 2-[(2R,5Z)-2-carboxy-4-methylthiazol-5(2H)-ylidene]ethyl phosphate. Lysine 140 lines the 4-amino-2-methyl-5-(diphosphooxymethyl)pyrimidine pocket. Residues glycine 169 and 189-190 (IS) contribute to the 2-[(2R,5Z)-2-carboxy-4-methylthiazol-5(2H)-ylidene]ethyl phosphate site.

This sequence belongs to the thiamine-phosphate synthase family. It depends on Mg(2+) as a cofactor.

It carries out the reaction 2-[(2R,5Z)-2-carboxy-4-methylthiazol-5(2H)-ylidene]ethyl phosphate + 4-amino-2-methyl-5-(diphosphooxymethyl)pyrimidine + 2 H(+) = thiamine phosphate + CO2 + diphosphate. The enzyme catalyses 2-(2-carboxy-4-methylthiazol-5-yl)ethyl phosphate + 4-amino-2-methyl-5-(diphosphooxymethyl)pyrimidine + 2 H(+) = thiamine phosphate + CO2 + diphosphate. It catalyses the reaction 4-methyl-5-(2-phosphooxyethyl)-thiazole + 4-amino-2-methyl-5-(diphosphooxymethyl)pyrimidine + H(+) = thiamine phosphate + diphosphate. It participates in cofactor biosynthesis; thiamine diphosphate biosynthesis; thiamine phosphate from 4-amino-2-methyl-5-diphosphomethylpyrimidine and 4-methyl-5-(2-phosphoethyl)-thiazole: step 1/1. Its function is as follows. Condenses 4-methyl-5-(beta-hydroxyethyl)thiazole monophosphate (THZ-P) and 2-methyl-4-amino-5-hydroxymethyl pyrimidine pyrophosphate (HMP-PP) to form thiamine monophosphate (TMP). This is Thiamine-phosphate synthase from Lysinibacillus sphaericus (strain C3-41).